The following is a 437-amino-acid chain: Doublesex- and mab-3-related transcription factor A2 (437 aa).

The DM DNA-binding region spans 49 to 96; sequence CARCRNHGVVSALKGHKRYCRWKDCMCAKCTLIAERQRVMAAQVALRR. The interval 160–253 is disordered; it reads IPRSMTPQLP…DPSSSSLARQ (94 aa). Composition is skewed to low complexity over residues 179–201 and 223–235; these read SEPV…SGSE and SPSL…SESG. Positions 254–289 constitute a DMA domain; that stretch reads RTPINILTRVFPAQKRSVLELVLQGCGGDVVQAIEQ.

This sequence belongs to the DMRT family.

It is found in the nucleus. Its function is as follows. May be involved in sexual development. This chain is Doublesex- and mab-3-related transcription factor A2 (dmrta2), found in Xenopus laevis (African clawed frog).